Reading from the N-terminus, the 143-residue chain is CRISPR-associated endoribonuclease Cas2 (143 aa).

D14 provides a ligand contact to Mg(2+).

This sequence belongs to the CRISPR-associated endoribonuclease Cas2 protein family. As to quaternary structure, homodimer, forms a heterotetramer with a Cas1 homodimer. The cofactor is Mg(2+).

CRISPR (clustered regularly interspaced short palindromic repeat), is an adaptive immune system that provides protection against mobile genetic elements (viruses, transposable elements and conjugative plasmids). CRISPR clusters contain sequences complementary to antecedent mobile elements and target invading nucleic acids. CRISPR clusters are transcribed and processed into CRISPR RNA (crRNA). Functions as a ssRNA-specific endoribonuclease. Involved in the integration of spacer DNA into the CRISPR cassette. This chain is CRISPR-associated endoribonuclease Cas2, found in Campylobacter jejuni subsp. jejuni serotype O:2 (strain ATCC 700819 / NCTC 11168).